We begin with the raw amino-acid sequence, 207 residues long: dTTP/UTP pyrophosphatase (207 aa).

Residue Asp79 is the Proton acceptor of the active site.

It belongs to the Maf family. YhdE subfamily. A divalent metal cation serves as cofactor.

The protein resides in the cytoplasm. It carries out the reaction dTTP + H2O = dTMP + diphosphate + H(+). The enzyme catalyses UTP + H2O = UMP + diphosphate + H(+). In terms of biological role, nucleoside triphosphate pyrophosphatase that hydrolyzes dTTP and UTP. May have a dual role in cell division arrest and in preventing the incorporation of modified nucleotides into cellular nucleic acids. This Rhodopseudomonas palustris (strain BisB18) protein is dTTP/UTP pyrophosphatase.